The chain runs to 385 residues: MARLGLLLLLLLALPPHFSSVSWPDTAQGTMANLILTALEKATLFLEDRLPTINLDGVVGFQVLEVQLRGVQEKWAHKPLLQPLSMRAGQMANTLSALLQKSIFYLKQSDPTYLREFQPSIQPGFWKLPNDWTRTNASLVYPWLEPLDSFSEESSDVCLVQLLGTGTDSSQPCRLSNFCRTLMTKAGCSGYSLSHQLLFFLWARMQGCTEGLFLQSQHYMDIFCANMMELNHRAEAVGYAYPTQDLFMENIMFCGMAGFSDFYKLRWLEAILSWQNPQVGCFGRPDTKGEPSEVPHQQGILRRVRRREKLFADGCSCHNTATAVAALGGFLYILAEYHPDNGDAHPEYYPNHGDPYSSSQSPASNYQDGAAGPDVQRTGRPLSVS.

Positions 1 to 20 are cleaved as a signal peptide; the sequence is MARLGLLLLLLLALPPHFSS. The segment at 344–385 is disordered; sequence AHPEYYPNHGDPYSSSQSPASNYQDGAAGPDVQRTGRPLSVS. Polar residues predominate over residues 356–367; sequence YSSSQSPASNYQ.

It belongs to the UPF0764 family. In terms of assembly, homodimer. Glycosylated. Predominantly expressed in thyroid tissue.

It is found in the secreted. The protein is UPF0764 protein C16orf89 homolog of Mus musculus (Mouse).